Reading from the N-terminus, the 310-residue chain is Aspartate carbamoyltransferase catalytic subunit (310 aa).

Residues Arg-55 and Thr-56 each coordinate carbamoyl phosphate. Lys-85 contacts L-aspartate. Residues Arg-106, His-135, and Gln-138 each coordinate carbamoyl phosphate. 2 residues coordinate L-aspartate: Arg-168 and Arg-230. Carbamoyl phosphate contacts are provided by Leu-268 and Pro-269.

The protein belongs to the aspartate/ornithine carbamoyltransferase superfamily. ATCase family. As to quaternary structure, heterododecamer (2C3:3R2) of six catalytic PyrB chains organized as two trimers (C3), and six regulatory PyrI chains organized as three dimers (R2).

The catalysed reaction is carbamoyl phosphate + L-aspartate = N-carbamoyl-L-aspartate + phosphate + H(+). Its pathway is pyrimidine metabolism; UMP biosynthesis via de novo pathway; (S)-dihydroorotate from bicarbonate: step 2/3. In terms of biological role, catalyzes the condensation of carbamoyl phosphate and aspartate to form carbamoyl aspartate and inorganic phosphate, the committed step in the de novo pyrimidine nucleotide biosynthesis pathway. This chain is Aspartate carbamoyltransferase catalytic subunit, found in Buchnera aphidicola subsp. Acyrthosiphon pisum (strain 5A).